We begin with the raw amino-acid sequence, 705 residues long: Tryptophan synthase (705 aa).

The interval M1 to K293 is tryptophan synthase alpha chain. Catalysis depends on proton acceptor residues E49 and D60. The segment at K266 to P287 is disordered. Positions G294–K705 are tryptophan synthase beta chain. K381 is subject to N6-(pyridoxal phosphate)lysine.

This sequence in the N-terminal section; belongs to the TrpA family. The protein in the C-terminal section; belongs to the TrpB family. Pyridoxal 5'-phosphate is required as a cofactor.

The catalysed reaction is (1S,2R)-1-C-(indol-3-yl)glycerol 3-phosphate + L-serine = D-glyceraldehyde 3-phosphate + L-tryptophan + H2O. The protein operates within amino-acid biosynthesis; L-tryptophan biosynthesis; L-tryptophan from chorismate: step 5/5. The sequence is that of Tryptophan synthase (TRP-1) from Coprinopsis cinerea (Inky cap fungus).